The chain runs to 1176 residues: DNA-directed RNA polymerase subunit beta (1176 aa).

The span at 13–30 (TDASLHQGRPQSSSNSSV) shows a compositional bias: polar residues. The tract at residues 13 to 35 (TDASLHQGRPQSSSNSSVPGAPN) is disordered.

This sequence belongs to the RNA polymerase beta chain family. The RNAP catalytic core consists of 2 alpha, 1 beta, 1 beta' and 1 omega subunit. When a sigma factor is associated with the core the holoenzyme is formed, which can initiate transcription.

The enzyme catalyses RNA(n) + a ribonucleoside 5'-triphosphate = RNA(n+1) + diphosphate. Its function is as follows. DNA-dependent RNA polymerase catalyzes the transcription of DNA into RNA using the four ribonucleoside triphosphates as substrates. This chain is DNA-directed RNA polymerase subunit beta, found in Mycobacterium ulcerans (strain Agy99).